A 347-amino-acid polypeptide reads, in one-letter code: MRIEEDLKLGFKDVLFRPKRSTLKSRSQVSLTRQFTFKHTQTQWQGVPVIAANMDTVGSFAMARTLASFEMMTAVHKHYSLAQWQTFVSETDPALLGHVMVSTGTSEDDFTKTRQILAMSSALRFICVDVANGYSQHFVEFLRKIREACPNHVILAGNVVTGEMVEELILSGADIVKVGIGPGSVCTTRVKTGVGYPQLSAIIECADAAHGLGGQIVGDGGCTCPGDVAKAFGGGADFVMLGGMLAAHEECGGEIVDVDGEPFMKFYGMSSSSAMDKHAGGVAEYRASEGKTVLLPYRGPVENTVRDILGGVRSTCTYVGASQLKELTKRTTFIRVREQENNVYGKE.

Residue 108 to 131 (DDFTKTRQILAMSSALRFICVDVA) coordinates NADP(+). K(+)-binding residues include Gly181 and Gly183. Cys186 (thioimidate intermediate) is an active-site residue. 216-239 (IVGDGGCTCPGDVAKAFGGGADFV) is an NADP(+) binding site.

The protein belongs to the IMPDH/GMPR family. GuaC type 1 subfamily. Homotetramer.

The catalysed reaction is IMP + NH4(+) + NADP(+) = GMP + NADPH + 2 H(+). Functionally, catalyzes the irreversible NADPH-dependent deamination of GMP to IMP. It functions in the conversion of nucleobase, nucleoside and nucleotide derivatives of G to A nucleotides, and in maintaining the intracellular balance of A and G nucleotides. The sequence is that of GMP reductase from Aeromonas hydrophila subsp. hydrophila (strain ATCC 7966 / DSM 30187 / BCRC 13018 / CCUG 14551 / JCM 1027 / KCTC 2358 / NCIMB 9240 / NCTC 8049).